Reading from the N-terminus, the 208-residue chain is Thymidylate kinase (208 aa).

10–17 (GPEGSGKT) is an ATP binding site.

The protein belongs to the thymidylate kinase family.

The enzyme catalyses dTMP + ATP = dTDP + ADP. Its function is as follows. Phosphorylation of dTMP to form dTDP in both de novo and salvage pathways of dTTP synthesis. The chain is Thymidylate kinase from Bacillus cereus (strain Q1).